Reading from the N-terminus, the 172-residue chain is 3-hydroxydecanoyl-[acyl-carrier-protein] dehydratase (172 aa).

The active site involves histidine 71.

It belongs to the thioester dehydratase family. FabA subfamily. Homodimer.

Its subcellular location is the cytoplasm. The catalysed reaction is a (3R)-hydroxyacyl-[ACP] = a (2E)-enoyl-[ACP] + H2O. It catalyses the reaction (3R)-hydroxydecanoyl-[ACP] = (2E)-decenoyl-[ACP] + H2O. The enzyme catalyses (2E)-decenoyl-[ACP] = (3Z)-decenoyl-[ACP]. It participates in lipid metabolism; fatty acid biosynthesis. Its function is as follows. Necessary for the introduction of cis unsaturation into fatty acids. Catalyzes the dehydration of (3R)-3-hydroxydecanoyl-ACP to E-(2)-decenoyl-ACP and then its isomerization to Z-(3)-decenoyl-ACP. Can catalyze the dehydratase reaction for beta-hydroxyacyl-ACPs with saturated chain lengths up to 16:0, being most active on intermediate chain length. The chain is 3-hydroxydecanoyl-[acyl-carrier-protein] dehydratase from Yersinia pseudotuberculosis serotype O:1b (strain IP 31758).